The primary structure comprises 597 residues: Dictomallein-3 (597 aa).

An N-terminal signal peptide occupies residues 1 to 19 (MKLILILIFLFSCILFINC). Positions 148–409 (PDVGQDYTLK…QNYFKNSIYY (262 aa)) constitute a Peptidase M66 domain. Histidine 301 contributes to the Zn(2+) binding site. Glutamate 302 is an active-site residue. Zn(2+)-binding residues include histidine 305 and histidine 311.

Belongs to the dictomallein family. It depends on Zn(2+) as a cofactor.

The protein resides in the secreted. This is Dictomallein-3 (dtmlC) from Dictyostelium discoideum (Social amoeba).